The chain runs to 113 residues: MTSDLSSKHCESCEGIGAALNSEQIKNLLPQLNTKWEVTEDNRIIKRAFSFKNFYETMAFVNAIAWIANIENHHPDLEVGYNYCRVHFMTHALNGLTHNDFICAAKIDKLLVD.

It belongs to the pterin-4-alpha-carbinolamine dehydratase family.

The enzyme catalyses (4aS,6R)-4a-hydroxy-L-erythro-5,6,7,8-tetrahydrobiopterin = (6R)-L-erythro-6,7-dihydrobiopterin + H2O. The sequence is that of Putative pterin-4-alpha-carbinolamine dehydratase from Legionella pneumophila (strain Paris).